The chain runs to 350 residues: Spermidine/putrescine import ATP-binding protein PotA (350 aa).

In terms of domain architecture, ABC transporter spans 6–236 (LELRNISKQY…PENLWTAQFI (231 aa)). 38-45 (GPSGCGKT) provides a ligand contact to ATP.

This sequence belongs to the ABC transporter superfamily. Spermidine/putrescine importer (TC 3.A.1.11.1) family. The complex is composed of two ATP-binding proteins (PotA), two transmembrane proteins (PotB and PotC) and a solute-binding protein (PotD).

Its subcellular location is the cell membrane. The catalysed reaction is ATP + H2O + polyamine-[polyamine-binding protein]Side 1 = ADP + phosphate + polyamineSide 2 + [polyamine-binding protein]Side 1.. Part of the ABC transporter complex PotABCD involved in spermidine/putrescine import. Responsible for energy coupling to the transport system. In Spiroplasma citri, this protein is Spermidine/putrescine import ATP-binding protein PotA.